A 275-amino-acid polypeptide reads, in one-letter code: MIQFTKMHGLGNDFMVVDGVTQNVFFSPEQIRRLADRNFGVGFDQLLLVEPPYDPDLDFHYRIFNADGGEVENCGNGARCFARFVRNKGLTNKNKIRVSTSAGKMTLRLERDGTVTVNMGVPVLDPSQIPFKAKKAEKTYLLQTSQQTFLCGAASMGNPHCVLDVEDVANANVAEIGALLTKHERFPRGVNVGFMQVVNSGHIKLRVYERGAAETLACGTGACAAVVVGQIQGKLDQQVRVDLPGGTLTINWEGEGKPLWMTGPAQHVYDGQIQL.

Asn12, Gln45, and Asn65 together coordinate substrate. Cys74 serves as the catalytic Proton donor. Substrate is bound by residues 75–76 (GN), Asn158, Asn191, and 209–210 (ER). Catalysis depends on Cys218, which acts as the Proton acceptor. 219-220 (GT) contributes to the substrate binding site.

This sequence belongs to the diaminopimelate epimerase family. As to quaternary structure, homodimer.

The protein localises to the cytoplasm. It catalyses the reaction (2S,6S)-2,6-diaminopimelate = meso-2,6-diaminopimelate. The protein operates within amino-acid biosynthesis; L-lysine biosynthesis via DAP pathway; DL-2,6-diaminopimelate from LL-2,6-diaminopimelate: step 1/1. Its function is as follows. Catalyzes the stereoinversion of LL-2,6-diaminopimelate (L,L-DAP) to meso-diaminopimelate (meso-DAP), a precursor of L-lysine and an essential component of the bacterial peptidoglycan. The sequence is that of Diaminopimelate epimerase from Shewanella sp. (strain MR-4).